Here is a 157-residue protein sequence, read N- to C-terminus: Peptide methionine sulfoxide reductase MsrB (157 aa).

Residues 14 to 137 form the MsrB domain; sequence DNDLRERLTP…NSAALRFVPL (124 aa). C126 (nucleophile) is an active-site residue.

This sequence belongs to the MsrB Met sulfoxide reductase family.

It carries out the reaction L-methionyl-[protein] + [thioredoxin]-disulfide + H2O = L-methionyl-(R)-S-oxide-[protein] + [thioredoxin]-dithiol. The polypeptide is Peptide methionine sulfoxide reductase MsrB (Deinococcus radiodurans (strain ATCC 13939 / DSM 20539 / JCM 16871 / CCUG 27074 / LMG 4051 / NBRC 15346 / NCIMB 9279 / VKM B-1422 / R1)).